We begin with the raw amino-acid sequence, 236 residues long: uncharacterized protein (236 aa).

A helical transmembrane segment spans residues G15–F34. The stretch at K36–A71 forms a coiled coil. Disordered regions lie at residues S83 to K113 and A185 to E236. 2 stretches are compositionally biased toward polar residues: residues Q93–G102 and A185–P195. A compositionally biased stretch (basic and acidic residues) spans A225–E236.

It is found in the membrane. This is an uncharacterized protein from Aedes vexans (Inland floodwater mosquito).